The sequence spans 65 residues: Muscarinic toxin-like protein 2 (65 aa).

4 cysteine pairs are disulfide-bonded: Cys3-Cys24, Cys17-Cys42, Cys46-Cys57, and Cys58-Cys63.

The protein belongs to the three-finger toxin family. Short-chain subfamily. Type C muscarinic toxin sub-subfamily. As to quaternary structure, monomer. In terms of tissue distribution, expressed by the venom gland.

It localises to the secreted. This is Muscarinic toxin-like protein 2 from Naja kaouthia (Monocled cobra).